A 201-amino-acid chain; its full sequence is Imidazoleglycerol-phosphate dehydratase (201 aa).

The protein belongs to the imidazoleglycerol-phosphate dehydratase family.

The protein resides in the cytoplasm. The catalysed reaction is D-erythro-1-(imidazol-4-yl)glycerol 3-phosphate = 3-(imidazol-4-yl)-2-oxopropyl phosphate + H2O. The protein operates within amino-acid biosynthesis; L-histidine biosynthesis; L-histidine from 5-phospho-alpha-D-ribose 1-diphosphate: step 6/9. This chain is Imidazoleglycerol-phosphate dehydratase, found in Synechococcus sp. (strain CC9902).